Reading from the N-terminus, the 171-residue chain is Serine acetyltransferase (171 aa).

This sequence belongs to the transferase hexapeptide repeat family.

The protein localises to the cytoplasm. The catalysed reaction is L-serine + acetyl-CoA = O-acetyl-L-serine + CoA. It participates in amino-acid biosynthesis; L-cysteine biosynthesis; L-cysteine from L-serine: step 1/2. The sequence is that of Serine acetyltransferase (cysE) from Helicobacter pylori (strain ATCC 700392 / 26695) (Campylobacter pylori).